Reading from the N-terminus, the 249-residue chain is Uridylate kinase (249 aa).

Residue 19–22 (KLSG) coordinates ATP. UMP is bound at residue G61. Residues G62 and R66 each coordinate ATP. Residues D81 and 142 to 149 (TGNPYFTT) contribute to the UMP site. 3 residues coordinate ATP: T169, Y175, and D178.

The protein belongs to the UMP kinase family. As to quaternary structure, homohexamer.

The protein localises to the cytoplasm. The catalysed reaction is UMP + ATP = UDP + ADP. It functions in the pathway pyrimidine metabolism; CTP biosynthesis via de novo pathway; UDP from UMP (UMPK route): step 1/1. With respect to regulation, inhibited by UTP. Functionally, catalyzes the reversible phosphorylation of UMP to UDP. This chain is Uridylate kinase, found in Anaeromyxobacter sp. (strain Fw109-5).